Here is a 593-residue protein sequence, read N- to C-terminus: Developmental and secondary metabolism regulator VEL1 (593 aa).

A compositionally biased stretch (polar residues) spans 1–16 (MSNIVVSNETKSQSVR). Residues 1-21 (MSNIVVSNETKSQSVRTTKDG) form a disordered region. The region spanning 21–212 (GRQIRYNLQV…AEQGCRVRIR (192 aa)) is the Velvet domain. Residues 35-40 (ERARAC) carry the Nuclear localization signal motif. The segment at 218-569 (RRRENKSSKE…PGSPDMEEPM (352 aa)) is disordered. The segment covering 310 to 326 (PSYGSNQPQYSQQYQTP) has biased composition (low complexity). A compositionally biased stretch (pro residues) spans 327 to 340 (QPAPMMQPPQPPQH). Composition is skewed to low complexity over residues 341–360 (STPYSQHSQHSSYSSQHQAQ) and 367–389 (QQYGYSNYQQQPQQPQSQSQPQY). Composition is skewed to polar residues over residues 413–429 (SSITQSPAQQYTASSHP) and 440–449 (GRSQQMSQPL). Residues 443-487 (QQMSQPLHSSPQSYASSAPSHQSLPSLRPIVADKLEPVSPSYQSP) form a PEST region. Residues 450–465 (HSSPQSYASSAPSHQS) are compositionally biased toward low complexity. Polar residues-rich tracts occupy residues 482 to 505 (PSYQSPPTSMSAAISVNSDGSNQH) and 512 to 534 (NPQTQGLPPMSATSNKRSFSSTF).

It belongs to the velvet family. VeA subfamily. Component of the heterotrimeric velvet complex composed of LAE1, VEL1 and VEL2; VEL1 acting as a bridging protein between LAE1 and VEL2.

The protein localises to the nucleus. It is found in the cytoplasm. Its function is as follows. Component of the velvet transcription factor complex that controls sexual/asexual developmental ratio in response to light, promoting sexual development in the darkness while stimulating asexual sporulation under illumination. The velvet complex acts as a global regulator for secondary metabolite gene expression. Controls the expression of the T-toxin gene cluster. Promotes oxidative stress tolerance and acts as a virulence factors during infection. Negatively regulate mycelial pigmentation and controls sexual development, as well as asexual development during vegetative growth. The protein is Developmental and secondary metabolism regulator VEL1 of Cochliobolus heterostrophus (strain C5 / ATCC 48332 / race O) (Southern corn leaf blight fungus).